The following is a 345-amino-acid chain: MLRDTHLALQRNWQSLRKPEKLDIEPGADDTRVATIIAEPLERGFGLTLGNALRRVLLSSLHGAAVTSVRIDGVLHEFSSIAGVREDVTDIVLNIKQIAVRMHGDGPKRMTVSATGPCEVTAGMIQTGHDIEVMNPELVICTLDDGATLGMEFTVESGRGYVPAAANRPEDAPIGLIPVDSIYSPVRRVSYRVEPTRVGQVTDYDRLILNIETNGAVTPEDAVALAARILQDQLGMFINFEEPQRLRAEEPRPELPFNPNLLRKVDELELSVRSANCLKNDNIVYIGDLVQKSEQEMLRTPNFGRKSLNEIKEVLSAMGLGLGMVVQDWPPENIEELVKRSDNPF.

The interval 1–241 is alpha N-terminal domain (alpha-NTD); the sequence is MLRDTHLALQ…DQLGMFINFE (241 aa). Residues 257 to 345 form an alpha C-terminal domain (alpha-CTD) region; sequence FNPNLLRKVD…ELVKRSDNPF (89 aa).

Belongs to the RNA polymerase alpha chain family. In terms of assembly, homodimer. The RNAP catalytic core consists of 2 alpha, 1 beta, 1 beta' and 1 omega subunit. When a sigma factor is associated with the core the holoenzyme is formed, which can initiate transcription.

It carries out the reaction RNA(n) + a ribonucleoside 5'-triphosphate = RNA(n+1) + diphosphate. In terms of biological role, DNA-dependent RNA polymerase catalyzes the transcription of DNA into RNA using the four ribonucleoside triphosphates as substrates. This is DNA-directed RNA polymerase subunit alpha from Acidiphilium cryptum (strain JF-5).